We begin with the raw amino-acid sequence, 330 residues long: Cobalamin biosynthesis protein CobD (330 aa).

4 consecutive transmembrane segments (helical) span residues 60 to 80 (TLVI…PPIV), 153 to 173 (GIIA…LLGV), 227 to 247 (LGIV…WKIF), and 308 to 328 (IVLF…FVLT).

It belongs to the CobD/CbiB family.

It localises to the cell membrane. It functions in the pathway cofactor biosynthesis; adenosylcobalamin biosynthesis. Its function is as follows. Converts cobyric acid to cobinamide by the addition of aminopropanol on the F carboxylic group. The chain is Cobalamin biosynthesis protein CobD from Desulfotalea psychrophila (strain LSv54 / DSM 12343).